The following is a 556-amino-acid chain: MLPRAVVLLSLTPFFAQAACPDWPVPRATDEITALQQQLQRWDSSYYRDGRSLVADELYDQARQRLLTWRQCFPQAPRAMDQPLLGAGGSIRHPIPHTGVEKLADANAVTGWLKGRDDIWAQPKVDGVAVTLIYHRGQFQQALSRGDGVHGHDWTRAAWQIEAIPKRLPRPVDLLLQGELYLRLEQHVQARSGSLKARNRVAGWMARKQLTAAEAAQIGLFVWDWPQGPATLSERLEQLADLGFAEPREYSRPVGGFADAQQWRARWYRSPLPFASDGIILRQSRRPAAERWQAKAPYWIAAWKYPYAQVLASVRQVDFRIGRTGRITPLLEIEPVTLDDRQIRRVSLGSLQRWRSLDIVPGDQVAISLAGLSIPRLDEVVLRSTLRQSIQPPREADFHFLSCWQPSPGCEEQFLARLTWLSSKQGLNLQNIGSRTWARLVETGRIKGLLDWLTLDQAELANIAGFGDRSSKRLLESLHSARQQPFPRWLKALGIPPSGSADLSGPWQALAMKNSLDWQNEAGIGAERAAQLVAFFRAPEVLALQGALNSAGIEGF.

Lysine 124 functions as the N6-AMP-lysine intermediate in the catalytic mechanism.

It belongs to the NAD-dependent DNA ligase family. LigB subfamily.

It carries out the reaction NAD(+) + (deoxyribonucleotide)n-3'-hydroxyl + 5'-phospho-(deoxyribonucleotide)m = (deoxyribonucleotide)n+m + AMP + beta-nicotinamide D-nucleotide.. In terms of biological role, catalyzes the formation of phosphodiester linkages between 5'-phosphoryl and 3'-hydroxyl groups in double-stranded DNA using NAD as a coenzyme and as the energy source for the reaction. The protein is DNA ligase B of Pseudomonas fluorescens (strain ATCC BAA-477 / NRRL B-23932 / Pf-5).